Reading from the N-terminus, the 364-residue chain is tRNA-specific 2-thiouridylase MnmA (364 aa).

Residues 6–13 (AMSGGVDS) and Leu-32 each bind ATP. Cys-101 (nucleophile) is an active-site residue. A disulfide bridge connects residues Cys-101 and Cys-193. ATP is bound at residue Gly-125. An interaction with tRNA region spans residues 143-145 (KDQ). Residue Cys-193 is the Cysteine persulfide intermediate of the active site.

It belongs to the MnmA/TRMU family.

Its subcellular location is the cytoplasm. The enzyme catalyses S-sulfanyl-L-cysteinyl-[protein] + uridine(34) in tRNA + AH2 + ATP = 2-thiouridine(34) in tRNA + L-cysteinyl-[protein] + A + AMP + diphosphate + H(+). Functionally, catalyzes the 2-thiolation of uridine at the wobble position (U34) of tRNA, leading to the formation of s(2)U34. In Rhodococcus jostii (strain RHA1), this protein is tRNA-specific 2-thiouridylase MnmA.